The following is a 276-amino-acid chain: MAIKKFKPTTNGRRNMTSLDFAEITTNRPEKSLTEKLSKKGGRNNQGRLTVRHQGGGHKRKYRIIDFKRNKDGVAGRVATIEYDPNRSANIALINYVDGEKRYILAPKGIKVGMEIMSGPEADIKVGNALPLVNIPVGTTIHNIELKPGKGGQLVRAAGASAQIQGRDGKYVIVRLQSGESRLFLGTCRATIGSVGNEEHELVNIGKAGRSRWLGKRPTVRGSVMNPVDHPHGGGEGRAPIGRSGPLTPWGKPALGLKTRKKNKSSDMYILRRRKK.

Positions 28-38 (RPEKSLTEKLS) are enriched in basic and acidic residues. Disordered regions lie at residues 28–57 (RPEK…QGGG) and 219–276 (TVRG…RRKK).

This sequence belongs to the universal ribosomal protein uL2 family. Part of the 50S ribosomal subunit. Forms a bridge to the 30S subunit in the 70S ribosome.

In terms of biological role, one of the primary rRNA binding proteins. Required for association of the 30S and 50S subunits to form the 70S ribosome, for tRNA binding and peptide bond formation. It has been suggested to have peptidyltransferase activity; this is somewhat controversial. Makes several contacts with the 16S rRNA in the 70S ribosome. The polypeptide is Large ribosomal subunit protein uL2 (Exiguobacterium sp. (strain ATCC BAA-1283 / AT1b)).